The sequence spans 255 residues: Acetylglutamate kinase (255 aa).

Substrate-binding positions include 40 to 41, Arg62, and Asn153; that span reads GG.

Belongs to the acetylglutamate kinase family. ArgB subfamily.

It localises to the cytoplasm. It carries out the reaction N-acetyl-L-glutamate + ATP = N-acetyl-L-glutamyl 5-phosphate + ADP. Its pathway is amino-acid biosynthesis; L-arginine biosynthesis; N(2)-acetyl-L-ornithine from L-glutamate: step 2/4. Its function is as follows. Catalyzes the ATP-dependent phosphorylation of N-acetyl-L-glutamate. The sequence is that of Acetylglutamate kinase from Bacillus cereus (strain ZK / E33L).